Consider the following 436-residue polypeptide: ATP-dependent RNA helicase SUB2 (436 aa).

A compositionally biased stretch (acidic residues) spans 1–16; the sequence is MSAEEDLIDYSDEELN. Residues 1-33 are disordered; that stretch reads MSAEEDLIDYSDEELNTNETAAPAADSNGKKGE. Residues 52-80 carry the Q motif motif; it reads TGFRDFLLKPELLRAIGDCGFEHPSEVQQ. The Helicase ATP-binding domain maps to 83-258; sequence IPQAMLGGDI…KKFMQNPTEH (176 aa). Residue 96–103 participates in ATP binding; it reads AKSGLGKT. Positions 205 to 208 match the DEAD box motif; the sequence is DECD. Residues 270–431 enclose the Helicase C-terminal domain; the sequence is GLQQYFVALE…EFPKDGIDAS (162 aa).

The protein belongs to the DEAD box helicase family. DECD subfamily.

Its subcellular location is the nucleus. The catalysed reaction is ATP + H2O = ADP + phosphate + H(+). Functionally, ATP-binding RNA helicase involved in transcription elongation and required for the export of mRNA out of the nucleus. SUB2 also plays a role in pre-mRNA splicing and spliceosome assembly. May be involved in rDNA and telomeric silencing, and maintenance of genome integrity. In Pyricularia oryzae (strain 70-15 / ATCC MYA-4617 / FGSC 8958) (Rice blast fungus), this protein is ATP-dependent RNA helicase SUB2 (SUB2).